The sequence spans 693 residues: Cyclin-dependent kinase G-1 (693 aa).

A compositionally biased stretch (gly residues) spans 1-10 (MAAGSHGGYR). Disordered stretches follow at residues 1 to 148 (MAAG…ARDP) and 236 to 308 (KKKK…DDYP). Over residues 13 to 24 (EVAREREHDVGV) the composition is skewed to basic and acidic residues. Residues 26–39 (RRSKEHYHHRHPSR) show a composition bias toward basic residues. 3 stretches are compositionally biased toward basic and acidic residues: residues 40–54 (HRDS…RSGG), 75–87 (RPSE…REPG), and 97–122 (RSGE…EEAK). The segment covering 268–284 (SVRSSSRSSDSGVLQGS) has biased composition (low complexity). Over residues 287 to 304 (RDLEVEKGDNIDVEKAAD) the composition is skewed to basic and acidic residues. The 292-residue stretch at 349–640 (FERLNTINEG…AEDALNHEWF (292 aa)) folds into the Protein kinase domain. ATP is bound by residues 355 to 363 (INEGTYGVV) and Lys378. At Thr359 the chain carries Phosphothreonine. Residue Tyr360 is modified to Phosphotyrosine. Asp473 acts as the Proton acceptor in catalysis. Position 500 is a phosphoserine (Ser500). Phosphothreonine is present on Thr506. The interval 664-693 (RFKKHMKSPDPLEEQWMKEQGNNGDRGLFG) is disordered.

It belongs to the protein kinase superfamily. CMGC Ser/Thr protein kinase family. CDC2/CDKX subfamily.

The catalysed reaction is L-seryl-[protein] + ATP = O-phospho-L-seryl-[protein] + ADP + H(+). It carries out the reaction L-threonyl-[protein] + ATP = O-phospho-L-threonyl-[protein] + ADP + H(+). The enzyme catalyses [DNA-directed RNA polymerase] + ATP = phospho-[DNA-directed RNA polymerase] + ADP + H(+). The chain is Cyclin-dependent kinase G-1 (CDKG-1) from Oryza sativa subsp. indica (Rice).